The primary structure comprises 131 residues: Small ribosomal subunit protein uS11 (131 aa).

This sequence belongs to the universal ribosomal protein uS11 family. In terms of assembly, part of the 30S ribosomal subunit. Interacts with proteins S7 and S18. Binds to IF-3.

In terms of biological role, located on the platform of the 30S subunit, it bridges several disparate RNA helices of the 16S rRNA. Forms part of the Shine-Dalgarno cleft in the 70S ribosome. The sequence is that of Small ribosomal subunit protein uS11 from Geobacter sulfurreducens (strain ATCC 51573 / DSM 12127 / PCA).